Consider the following 715-residue polypeptide: Elongation factor G (715 aa).

Residues 12–309 (RRVRNIGIMA…GVIDYLPSPL (298 aa)) form the tr-type G domain. GTP contacts are provided by residues 21-28 (AHIDAGKT), 108-112 (DTPGH), and 162-165 (NKMD).

It belongs to the TRAFAC class translation factor GTPase superfamily. Classic translation factor GTPase family. EF-G/EF-2 subfamily.

The protein localises to the cytoplasm. Catalyzes the GTP-dependent ribosomal translocation step during translation elongation. During this step, the ribosome changes from the pre-translocational (PRE) to the post-translocational (POST) state as the newly formed A-site-bound peptidyl-tRNA and P-site-bound deacylated tRNA move to the P and E sites, respectively. Catalyzes the coordinated movement of the two tRNA molecules, the mRNA and conformational changes in the ribosome. In Rubrobacter xylanophilus (strain DSM 9941 / JCM 11954 / NBRC 16129 / PRD-1), this protein is Elongation factor G.